The sequence spans 229 residues: UPF0758 protein Fjoh_0413 (229 aa).

Positions 107–229 (KITSSKDAFT…YYSFVDEGIF (123 aa)) constitute an MPN domain. Zn(2+) contacts are provided by His178, His180, and Asp191. A JAMM motif motif is present at residues 178–191 (HNHPSGELNPSQAD).

It belongs to the UPF0758 family.

This is UPF0758 protein Fjoh_0413 from Flavobacterium johnsoniae (strain ATCC 17061 / DSM 2064 / JCM 8514 / BCRC 14874 / CCUG 350202 / NBRC 14942 / NCIMB 11054 / UW101) (Cytophaga johnsonae).